Reading from the N-terminus, the 745-residue chain is Elongation factor G, mitochondrial (745 aa).

Residues 40–317 (ERIRNIGISA…AVLDYLPNPG (278 aa)) enclose the tr-type G domain. Residues 49-56 (AHIDSGKT), 116-120 (DTPGH), and 170-173 (NKLD) contribute to the GTP site.

This sequence belongs to the TRAFAC class translation factor GTPase superfamily. Classic translation factor GTPase family. EF-G/EF-2 subfamily.

The protein localises to the mitochondrion. Its pathway is protein biosynthesis; polypeptide chain elongation. Functionally, mitochondrial GTPase that catalyzes the GTP-dependent ribosomal translocation step during translation elongation. During this step, the ribosome changes from the pre-translocational (PRE) to the post-translocational (POST) state as the newly formed A-site-bound peptidyl-tRNA and P-site-bound deacylated tRNA move to the P and E sites, respectively. Catalyzes the coordinated movement of the two tRNA molecules, the mRNA and conformational changes in the ribosome. Essential during development as it acts as a retrograde signal from mitochondria to the nucleus to slow down cell proliferation if mitochondrial energy output is low. The chain is Elongation factor G, mitochondrial from Drosophila melanogaster (Fruit fly).